The sequence spans 351 residues: Peroxidase C1B (351 aa).

The signal sequence occupies residues 1 to 28 (MHSPSSTSFTWILITLGCLAFYASLSDA). Disulfide bonds link Cys39/Cys119, Cys72/Cys77, Cys125/Cys329, and Cys205/Cys237. N-linked (GlcNAc...) asparagine glycosylation occurs at Asn41. His70 (proton acceptor) is an active-site residue. Positions 71, 74, 76, 78, and 80 each coordinate Ca(2+). N-linked (GlcNAc...) asparagine glycosylation is present at Asn85. Position 167 (Pro167) interacts with substrate. His198 is a heme b binding site. Thr199 contacts Ca(2+). 3 N-linked (GlcNAc...) asparagine glycosylation sites follow: Asn214, Asn226, and Asn242. Ca(2+) is bound by residues Asp250, Thr253, and Asp258. N-linked (GlcNAc...) asparagine glycosylation occurs at Asn283.

This sequence belongs to the peroxidase family. Classical plant (class III) peroxidase subfamily. Requires Ca(2+) as cofactor. It depends on heme b as a cofactor.

It is found in the secreted. Its subcellular location is the vacuole. It carries out the reaction 2 a phenolic donor + H2O2 = 2 a phenolic radical donor + 2 H2O. Functionally, removal of H(2)O(2), oxidation of toxic reductants, biosynthesis and degradation of lignin, suberization, auxin catabolism, response to environmental stresses such as wounding, pathogen attack and oxidative stress. These functions might be dependent on each isozyme/isoform in each plant tissue. The protein is Peroxidase C1B (PRXC1B) of Armoracia rusticana (Horseradish).